Consider the following 1179-residue polypeptide: Pesticidal crystal protein Cry1Ad (1179 aa).

It belongs to the delta endotoxin family.

Functionally, promotes colloidosmotic lysis by binding to the midgut epithelial cells of many lepidopteran larvae. This chain is Pesticidal crystal protein Cry1Ad (cry1Ad), found in Bacillus thuringiensis subsp. aizawai.